Reading from the N-terminus, the 1119-residue chain is Translation initiation factor IF-2 (1119 aa).

Disordered regions lie at residues 64–463 (SIKK…TSGY) and 477–507 (RPKK…RQRQ). A compositionally biased stretch (basic and acidic residues) spans 70–102 (IKKDNYKQNKEDKSSLISSVEEKPFKDNPEKKP). 2 stretches are compositionally biased toward polar residues: residues 116–153 (IISN…QNLN) and 182–212 (KNTT…KPDQ). Low complexity predominate over residues 213–224 (NSSKSKTKNINN). 4 stretches are compositionally biased toward polar residues: residues 242–257 (NKQN…QTVP), 281–297 (FNRQ…SSNK), 319–328 (FNRQVNTNRS), and 375–387 (QVIN…NSET). Residues 421 to 435 (GKTDWDDSAKLEALR) are compositionally biased toward basic and acidic residues. The segment covering 493-507 (KQFKKKKKETTRQRQ) has biased composition (basic residues). A tr-type G domain is found at 610-782 (KRPPVITVMG…ILLVSEVEDL (173 aa)). The G1 stretch occupies residues 619-626 (GHVDHGKT). 619–626 (GHVDHGKT) is a GTP binding site. Positions 644-648 (GITQH) are G2. The segment at 669–672 (DTPG) is G3. GTP-binding positions include 669-673 (DTPGH) and 723-726 (NKID). The tract at residues 723-726 (NKID) is G4. A G5 region spans residues 759 to 761 (SAI).

Belongs to the TRAFAC class translation factor GTPase superfamily. Classic translation factor GTPase family. IF-2 subfamily.

It localises to the cytoplasm. Its function is as follows. One of the essential components for the initiation of protein synthesis. Protects formylmethionyl-tRNA from spontaneous hydrolysis and promotes its binding to the 30S ribosomal subunits. Also involved in the hydrolysis of GTP during the formation of the 70S ribosomal complex. This is Translation initiation factor IF-2 from Prochlorococcus marinus (strain MIT 9215).